A 439-amino-acid chain; its full sequence is Serine--tRNA ligase (439 aa).

L-serine is bound at residue 237–239 (TAE). ATP is bound at residue 268-270 (RAE). E291 serves as a coordination point for L-serine. Residue 362–365 (EISS) coordinates ATP. S397 provides a ligand contact to L-serine.

Belongs to the class-II aminoacyl-tRNA synthetase family. Type-1 seryl-tRNA synthetase subfamily. In terms of assembly, homodimer. The tRNA molecule binds across the dimer.

The protein localises to the cytoplasm. The enzyme catalyses tRNA(Ser) + L-serine + ATP = L-seryl-tRNA(Ser) + AMP + diphosphate + H(+). It carries out the reaction tRNA(Sec) + L-serine + ATP = L-seryl-tRNA(Sec) + AMP + diphosphate + H(+). It participates in aminoacyl-tRNA biosynthesis; selenocysteinyl-tRNA(Sec) biosynthesis; L-seryl-tRNA(Sec) from L-serine and tRNA(Sec): step 1/1. Catalyzes the attachment of serine to tRNA(Ser). Is also able to aminoacylate tRNA(Sec) with serine, to form the misacylated tRNA L-seryl-tRNA(Sec), which will be further converted into selenocysteinyl-tRNA(Sec). The chain is Serine--tRNA ligase from Afipia carboxidovorans (strain ATCC 49405 / DSM 1227 / KCTC 32145 / OM5) (Oligotropha carboxidovorans).